Consider the following 539-residue polypeptide: T-complex protein 1 subunit delta (539 aa).

The disordered stretch occupies residues 1 to 29; the sequence is MPENVAPRSGATAGAAGGRGKGAYQDRDK. Arginine 19 is modified (omega-N-methylarginine). Lysine 21 is modified (N6-acetyllysine). Phosphoserine is present on serine 36. Glycine 53 contacts ADP. Glycine 53 is a binding site for ATP. Residue aspartate 104 coordinates Mg(2+). ADP is bound by residues glycine 105, threonine 106, threonine 107, serine 108, asparagine 172, serine 173, and lysine 174. ATP is bound by residues glycine 105 and threonine 106. Lysine 174 is an ATP binding site. Phosphoserine is present on residues serine 184 and serine 202. Lysine 288, lysine 302, lysine 319, and lysine 326 each carry N6-acetyllysine. Glycine 425 is an ADP binding site. The residue at position 444 (serine 444) is a Phosphoserine. Position 510 (glutamine 510) interacts with ADP.

The protein belongs to the TCP-1 chaperonin family. In terms of assembly, component of the chaperonin-containing T-complex (TRiC), a hexadecamer composed of two identical back-to-back stacked rings enclosing a protein folding chamber. Each ring is made up of eight different subunits: TCP1/CCT1, CCT2, CCT3, CCT4, CCT5, CCT6A/CCT6, CCT7, CCT8. Interacts with PACRG. Interacts with DNAAF4. Interacts with DLEC1.

It localises to the cytoplasm. It is found in the melanosome. The protein resides in the cytoskeleton. Its subcellular location is the microtubule organizing center. The protein localises to the centrosome. It localises to the cilium basal body. It catalyses the reaction ATP + H2O = ADP + phosphate + H(+). Its function is as follows. Component of the chaperonin-containing T-complex (TRiC), a molecular chaperone complex that assists the folding of actin, tubulin and other proteins upon ATP hydrolysis. The TRiC complex mediates the folding of WRAP53/TCAB1, thereby regulating telomere maintenance. As part of the TRiC complex may play a role in the assembly of BBSome, a complex involved in ciliogenesis regulating transports vesicles to the cilia. The polypeptide is T-complex protein 1 subunit delta (CCT4) (Homo sapiens (Human)).